Here is a 434-residue protein sequence, read N- to C-terminus: Tyrosine-protein phosphatase non-receptor type 1 (434 aa).

The region spanning 3–277 (IEKEFHRLDQ…RFSYLAVIEG (275 aa)) is the Tyrosine-protein phosphatase domain. Ser-50 bears the Phosphoserine mark. Residues Asp-181, 215–221 (CSAGIGR), and Gln-262 contribute to the substrate site. Cys-215 functions as the Phosphocysteine intermediate in the catalytic mechanism. The segment at 291-319 (WKELSNEDLDPPPEHTPPPPRPPKRTSEM) is disordered.

This sequence belongs to the protein-tyrosine phosphatase family. Non-receptor class 1 subfamily. In terms of assembly, interacts with EPHA3 (phosphorylated); dephosphorylates EPHA3 and may regulate its trafficking and function. Interacts with MET. Interacts with NCK1. In terms of processing, phosphorylated on serine and threonine residues near the N-terminus by casein kinase II (CK2).

It is found in the endoplasmic reticulum membrane. The enzyme catalyses O-phospho-L-tyrosyl-[protein] + H2O = L-tyrosyl-[protein] + phosphate. Functionally, may play an important role in CKII- and p60c-src-induced signal transduction cascades. May regulate the EFNA5-EPHA3 signaling pathway which modulates cell reorganization and cell-cell repulsion. May also regulate the hepatocyte growth factor receptor signaling pathway through dephosphorylation of MET. The protein is Tyrosine-protein phosphatase non-receptor type 1 (PTPN1) of Gallus gallus (Chicken).